A 369-amino-acid polypeptide reads, in one-letter code: 2-aminoethylphosphonate--pyruvate transaminase 1 (369 aa).

The residue at position 191 (Lys-191) is an N6-(pyridoxal phosphate)lysine.

Belongs to the class-V pyridoxal-phosphate-dependent aminotransferase family. PhnW subfamily. Homodimer. It depends on pyridoxal 5'-phosphate as a cofactor.

It carries out the reaction (2-aminoethyl)phosphonate + pyruvate = phosphonoacetaldehyde + L-alanine. Functionally, involved in phosphonate degradation. This Burkholderia lata (strain ATCC 17760 / DSM 23089 / LMG 22485 / NCIMB 9086 / R18194 / 383) protein is 2-aminoethylphosphonate--pyruvate transaminase 1.